A 294-amino-acid chain; its full sequence is UPF0282 protein APE_0500.1 (294 aa).

It belongs to the UPF0282 family.

The protein is UPF0282 protein APE_0500.1 of Aeropyrum pernix (strain ATCC 700893 / DSM 11879 / JCM 9820 / NBRC 100138 / K1).